The chain runs to 147 residues: Large ribosomal subunit protein uL15 (147 aa).

Positions 1-57 are disordered; the sequence is MRLHDVKPQKGSKKRKKRVARGISAGQGASAGLGMRGQKSRSGSGTRPGFEGGQQPL. The segment covering 10-20 has biased composition (basic residues); it reads KGSKKRKKRVA.

Belongs to the universal ribosomal protein uL15 family. In terms of assembly, part of the 50S ribosomal subunit.

In terms of biological role, binds to the 23S rRNA. This is Large ribosomal subunit protein uL15 from Nostoc punctiforme (strain ATCC 29133 / PCC 73102).